The primary structure comprises 345 residues: Probable RuBisCO transcriptional regulator (345 aa).

The HTH lysR-type domain occupies 6–63 (FTLDQLRILKAIASEGSFKRAADTLYVSQPAVSLQVQNLEKQLSVPLFDRGGRKAQLT). Positions 23 to 42 (FKRAADTLYVSQPAVSLQVQ) form a DNA-binding region, H-T-H motif. The interval 311–345 (LDPERLFANPYSSNNGDRQGDGKDGKGSIEIDSVT) is disordered. Residues 328-339 (RQGDGKDGKGSI) are compositionally biased toward basic and acidic residues.

The protein belongs to the LysR transcriptional regulatory family.

Functionally, trans-acting transcriptional regulator of RuBisCO genes (rbcL and rbcS) expression. In Synechocystis sp. (strain ATCC 27184 / PCC 6803 / Kazusa), this protein is Probable RuBisCO transcriptional regulator (rbcR).